The chain runs to 179 residues: ATP synthase subunit delta (179 aa).

This sequence belongs to the ATPase delta chain family. In terms of assembly, F-type ATPases have 2 components, F(1) - the catalytic core - and F(0) - the membrane proton channel. F(1) has five subunits: alpha(3), beta(3), gamma(1), delta(1), epsilon(1). F(0) has three main subunits: a(1), b(2) and c(10-14). The alpha and beta chains form an alternating ring which encloses part of the gamma chain. F(1) is attached to F(0) by a central stalk formed by the gamma and epsilon chains, while a peripheral stalk is formed by the delta and b chains.

It localises to the cell membrane. In terms of biological role, f(1)F(0) ATP synthase produces ATP from ADP in the presence of a proton or sodium gradient. F-type ATPases consist of two structural domains, F(1) containing the extramembraneous catalytic core and F(0) containing the membrane proton channel, linked together by a central stalk and a peripheral stalk. During catalysis, ATP synthesis in the catalytic domain of F(1) is coupled via a rotary mechanism of the central stalk subunits to proton translocation. Its function is as follows. This protein is part of the stalk that links CF(0) to CF(1). It either transmits conformational changes from CF(0) to CF(1) or is implicated in proton conduction. This chain is ATP synthase subunit delta, found in Listeria monocytogenes serovar 1/2a (strain ATCC BAA-679 / EGD-e).